Reading from the N-terminus, the 263-residue chain is MGQKIHPTGFRLAVTRNWSSRWFADDKAFGSMLAEDIRVREYLKKKLKSASVGRVIIERPAKNARITVYSARPGVVIGKRGEDIESLKADLQRLMGVPVHVNIEEIRKPETDAQLIADSISQQLEKRIMFRRAMKRAMQNAMRLGAQGIKIMSSGRLNGIEIARTEWYREGRVPLHTLKANIDYGTSEAHTTYGVIGIKVWVYKGDMLANGELPPEAATPREEERRPRRAPRGDRPDGGRPGRPGGRGRGPRKADAAPAPEGE.

The region spanning Val39–Arg107 is the KH type-2 domain. A disordered region spans residues Gly211–Glu263. Residues Thr219–Arg240 are compositionally biased toward basic and acidic residues.

This sequence belongs to the universal ribosomal protein uS3 family. Part of the 30S ribosomal subunit. Forms a tight complex with proteins S10 and S14.

Its function is as follows. Binds the lower part of the 30S subunit head. Binds mRNA in the 70S ribosome, positioning it for translation. This Bordetella petrii (strain ATCC BAA-461 / DSM 12804 / CCUG 43448) protein is Small ribosomal subunit protein uS3.